The following is a 1713-amino-acid chain: Serine/threonine-protein kinase MRCK beta (1713 aa).

Residues 76-342 form the Protein kinase domain; that stretch reads FEIIKVIGRG…IEDFKKHAFF (267 aa). ATP contacts are provided by residues 82–90 and lysine 105; that span reads IGRGAFGEV. Aspartate 200 functions as the Proton acceptor in the catalytic mechanism. Residues serine 221 and serine 233 each carry the phosphoserine; by autocatalysis modification. Threonine 239 carries the phosphothreonine; by autocatalysis modification. One can recognise an AGC-kinase C-terminal domain in the interval 343–413; sequence EGLNWENIRN…TTESCFSDRG (71 aa). Position 423 is a phosphothreonine (threonine 423). Residues 434–649 adopt a coiled-coil conformation; sequence LENSLQIEAY…ASKERKLREH (216 aa). The segment at 461 to 485 is disordered; sequence LQESTQTVQSLHGSTRALGNSNRDK. Over residues 463–481 the composition is skewed to polar residues; the sequence is ESTQTVQSLHGSTRALGNS. Arginine 671 carries the post-translational modification Omega-N-methylarginine. Coiled coils occupy residues 681-815 and 882-939; these read QEIS…AHWE and ALEA…FRAD. Serine 927 is modified (phosphoserine). Tyrosine 954 bears the Phosphotyrosine mark. Polar residues-rich tracts occupy residues 971–994 and 1001–1014; these read ASDQ…TSTE and RSQQ…LPNT. Positions 971-1014 are disordered; it reads ASDQETQASKLDLSPSVSVATSTEQQEDAARSQQRPSTVPLPNT. The Phorbol-ester/DAG-type zinc-finger motif lies at 1026–1076; the sequence is AHQFSIKSFPSPTQCSHCTSLMVGLIRQGYACEVCAFSCHVSCKDSAPQVC. The PH domain occupies 1096-1215; that stretch reads GTAYKGYVKV…WVGILEGLQA (120 aa). Residues 1241–1515 enclose the CNH domain; it reads IKTVLAAAIV…RPLNSDGSLN (275 aa). The CRIB domain maps to 1585-1598; sequence ISNPTNFNHVAHMG. Residues 1615-1713 are disordered; that stretch reads PTAQEEKQGP…EGLDQPACDA (99 aa). Basic and acidic residues predominate over residues 1666–1677; the sequence is DFDKEPDSDSTK. Phosphoserine is present on residues serine 1682, serine 1684, serine 1688, serine 1692, and serine 1695.

The protein belongs to the protein kinase superfamily. AGC Ser/Thr protein kinase family. DMPK subfamily. In terms of assembly, homodimer and homotetramer via the coiled coil regions. Interacts tightly with GTP-bound but not GDP-bound CDC42. Interacts with TJP1; this interaction requires the presence of catalytically active CDC42. Forms a tripartite complex with MYO18A and LURAP1 with the latter acting as an adapter connecting CDC42BPB and MYO18A. LURAP1 binding results in activation of CDC42BPB by abolition of its negative autoregulation. Interacts with STRIP1, STRN3 and SIKE1. Interacts with CPNE4 (via VWFA domain). Interacts with LURAP1. Interacts (via AGC-kinase C-terminal domain) with FAM89B/LRAP25 (via LRR repeat). Forms a tripartite complex with FAM89B/LRAP25 and LIMK1. Requires Mg(2+) as cofactor. Proteolytically cleaved by caspases upon apoptosis induction. Expressed in all tissues examined with highest levels in lung and kidney.

The protein resides in the cytoplasm. The protein localises to the cell membrane. It localises to the cell junction. It is found in the cell projection. Its subcellular location is the lamellipodium. It catalyses the reaction L-seryl-[protein] + ATP = O-phospho-L-seryl-[protein] + ADP + H(+). The enzyme catalyses L-threonyl-[protein] + ATP = O-phospho-L-threonyl-[protein] + ADP + H(+). Its activity is regulated as follows. Maintained in an inactive, closed conformation by an interaction between the kinase domain and the negative autoregulatory C-terminal coiled-coil region. Agonist binding to the phorbol ester binding site disrupts this, releasing the kinase domain to allow N-terminus-mediated dimerization and kinase activation by transautophosphorylation. Inhibited by chelerythrine chloride. Functionally, serine/threonine-protein kinase which is an important downstream effector of CDC42 and plays a role in the regulation of cytoskeleton reorganization and cell migration. Regulates actin cytoskeletal reorganization via phosphorylation of PPP1R12C and MYL9/MLC2. In concert with MYO18A and LURAP1, is involved in modulating lamellar actomyosin retrograde flow that is crucial to cell protrusion and migration. Phosphorylates PPP1R12A. In concert with FAM89B/LRAP25 mediates the targeting of LIMK1 to the lamellipodium resulting in its activation and subsequent phosphorylation of CFL1 which is important for lamellipodial F-actin regulation. The polypeptide is Serine/threonine-protein kinase MRCK beta (Rattus norvegicus (Rat)).